The sequence spans 87 residues: Small ribosomal subunit protein eS21 (87 aa).

Belongs to the eukaryotic ribosomal protein eS21 family. As to quaternary structure, component of the small ribosomal subunit (SSU). Mature N.crassa ribosomes consist of a small (40S) and a large (60S) subunit. The 40S small subunit contains 1 molecule of ribosomal RNA (18S rRNA) and at least 32 different proteins. The large 60S subunit contains 3 rRNA molecules (26S, 5.8S and 5S rRNA) and at least 42 different proteins.

Its subcellular location is the cytoplasm. Its function is as follows. Component of the ribosome, a large ribonucleoprotein complex responsible for the synthesis of proteins in the cell. The small ribosomal subunit (SSU) binds messenger RNAs (mRNAs) and translates the encoded message by selecting cognate aminoacyl-transfer RNA (tRNA) molecules. The large subunit (LSU) contains the ribosomal catalytic site termed the peptidyl transferase center (PTC), which catalyzes the formation of peptide bonds, thereby polymerizing the amino acids delivered by tRNAs into a polypeptide chain. The nascent polypeptides leave the ribosome through a tunnel in the LSU and interact with protein factors that function in enzymatic processing, targeting, and the membrane insertion of nascent chains at the exit of the ribosomal tunnel. The chain is Small ribosomal subunit protein eS21 (crp-7) from Neurospora crassa (strain ATCC 24698 / 74-OR23-1A / CBS 708.71 / DSM 1257 / FGSC 987).